A 35-amino-acid chain; its full sequence is uncharacterized protein (35 aa).

Low complexity predominate over residues 1 to 27; sequence MDQNEANIYNENNENNENNENENCQNE. Residues 1 to 35 are disordered; it reads MDQNEANIYNENNENNENNENENCQNEPIRIKIII.

This is an uncharacterized protein from Dictyostelium discoideum (Social amoeba).